A 330-amino-acid chain; its full sequence is Copper-containing nitrite reductase (330 aa).

Plastocyanin-like domains follow at residues glycine 1–valine 165 and tyrosine 166–alanine 330. Cu cation contacts are provided by histidine 85, histidine 90, histidine 125, cysteine 126, histidine 135, methionine 140, and histidine 296.

The protein belongs to the multicopper oxidase family. As to quaternary structure, homotrimer. Cu(2+) serves as cofactor. The cofactor is Cu(+). FAD is required as a cofactor.

It localises to the periplasm. It carries out the reaction nitric oxide + Fe(III)-[cytochrome c] + H2O = Fe(II)-[cytochrome c] + nitrite + 2 H(+). The protein operates within nitrogen metabolism; nitrate reduction (denitrification); dinitrogen from nitrate: step 2/4. This is Copper-containing nitrite reductase (nirK) from Alcaligenes xylosoxydans xylosoxydans (Achromobacter xylosoxidans).